Here is a 255-residue protein sequence, read N- to C-terminus: MILNKALLLGALALTAVMSPCGGEDIVADHVASYGVNFYQSHGPSGQYTHEFDGDEEFYVDLETKETVWQLPMFSKFISFDPQSALRNMAVGKHTLEFMMRQSNSTAATNEVPEVTVFSKFPVTLGQPNTLICLVDNIFPPVVNITWLSNGHSVTEGVSETSFLSKSDHSFFKISYLTFLPSADEIYDCKVEHWGLDEPLLKHWEPEIPAPMSELTETLVCALGLSVGLMGIVVGTVFIIQGLRSVGASRHQGLL.

Positions 1-23 (MILNKALLLGALALTAVMSPCGG) are cleaved as a signal peptide. Residues 24 to 110 (EDIVADHVAS…RQSNSTAATN (87 aa)) form an alpha-1 region. Residues 24-217 (EDIVADHVAS…IPAPMSELTE (194 aa)) are Extracellular-facing. N-linked (GlcNAc...) asparagine glycans are attached at residues Asn104 and Asn144. The segment at 111 to 204 (EVPEVTVFSK…GLDEPLLKHW (94 aa)) is alpha-2. The region spanning 113–205 (PEVTVFSKFP…LDEPLLKHWE (93 aa)) is the Ig-like C1-type domain. A disulfide bond links Cys133 and Cys189. Positions 205–217 (EPEIPAPMSELTE) are connecting peptide. Residues 218–240 (TLVCALGLSVGLMGIVVGTVFII) traverse the membrane as a helical segment. The Cytoplasmic portion of the chain corresponds to 241-255 (QGLRSVGASRHQGLL).

It belongs to the MHC class II family. Heterodimer of an alpha and a beta subunit; also referred as MHC class II molecule. Dimer formation with HLA-DQB2, but not with HLA-DQB1, is required for efficient exit from the endoplasmic reticulum (ER). In the ER, forms a heterononamer; 3 MHC class II molecules bind to a CD74 homotrimer (also known as invariant chain or HLA class II histocompatibility antigen gamma chain). In the endosomal/lysosomal system; CD74 undergoes sequential degradation by various proteases; leaving a small fragment termed CLIP on each MHC class II molecule. MHC class II molecule interacts with HLA_DM, and HLA_DO in B-cells, in order to release CLIP and facilitate the binding of antigenic peptides. Association with HLA-DMA also occurs in skin Langerhans cells, in post-Golgi compartments. As to expression, restricted to skin Langerhans cells, although some expression at low levels may occur at the surface of B lymphoblastoid cells.

It is found in the cell membrane. It localises to the endoplasmic reticulum membrane. The protein localises to the golgi apparatus. Its subcellular location is the trans-Golgi network membrane. The protein resides in the endosome membrane. It is found in the lysosome membrane. In terms of biological role, binds peptides derived from antigens that access the endocytic route of antigen presenting cells (APC) and presents them on the cell surface for recognition by the CD4 T-cells. The peptide binding cleft accommodates peptides of 10-30 residues. The peptides presented by MHC class II molecules are generated mostly by degradation of proteins that access the endocytic route, where they are processed by lysosomal proteases and other hydrolases. Exogenous antigens that have been endocytosed by the APC are thus readily available for presentation via MHC II molecules, and for this reason this antigen presentation pathway is usually referred to as exogenous. As membrane proteins on their way to degradation in lysosomes as part of their normal turn-over are also contained in the endosomal/lysosomal compartments, exogenous antigens must compete with those derived from endogenous components. Autophagy is also a source of endogenous peptides, autophagosomes constitutively fuse with MHC class II loading compartments. In addition to APCs, other cells of the gastrointestinal tract, such as epithelial cells, express MHC class II molecules and CD74 and act as APCs, which is an unusual trait of the GI tract. To produce a MHC class II molecule that presents an antigen, three MHC class II molecules (heterodimers of an alpha and a beta chain) associate with a CD74 trimer in the ER to form a heterononamer. Soon after the entry of this complex into the endosomal/lysosomal system where antigen processing occurs, CD74 undergoes a sequential degradation by various proteases, including CTSS and CTSL, leaving a small fragment termed CLIP (class-II-associated invariant chain peptide). The removal of CLIP is facilitated by HLA-DM via direct binding to the alpha-beta-CLIP complex so that CLIP is released. HLA-DM stabilizes MHC class II molecules until primary high affinity antigenic peptides are bound. The MHC II molecule bound to a peptide is then transported to the cell membrane surface. In B-cells, the interaction between HLA-DM and MHC class II molecules is regulated by HLA-DO. Primary dendritic cells (DCs) also to express HLA-DO. Lysosomal microenvironment has been implicated in the regulation of antigen loading into MHC II molecules, increased acidification produces increased proteolysis and efficient peptide loading. This chain is HLA class II histocompatibility antigen, DQ alpha 2 chain (HLA-DQA2), found in Homo sapiens (Human).